Reading from the N-terminus, the 756-residue chain is 1,4-alpha-glucan branching enzyme GlgB (756 aa).

The Nucleophile role is filled by Asp-425. Catalysis depends on Glu-478, which acts as the Proton donor.

Belongs to the glycosyl hydrolase 13 family. GlgB subfamily. As to quaternary structure, monomer.

The enzyme catalyses Transfers a segment of a (1-&gt;4)-alpha-D-glucan chain to a primary hydroxy group in a similar glucan chain.. It functions in the pathway glycan biosynthesis; glycogen biosynthesis. Functionally, catalyzes the formation of the alpha-1,6-glucosidic linkages in glycogen by scission of a 1,4-alpha-linked oligosaccharide from growing alpha-1,4-glucan chains and the subsequent attachment of the oligosaccharide to the alpha-1,6 position. The sequence is that of 1,4-alpha-glucan branching enzyme GlgB from Cupriavidus necator (strain ATCC 17699 / DSM 428 / KCTC 22496 / NCIMB 10442 / H16 / Stanier 337) (Ralstonia eutropha).